A 92-amino-acid chain; its full sequence is Small ribosomal subunit protein uS19 (92 aa).

This sequence belongs to the universal ribosomal protein uS19 family.

Protein S19 forms a complex with S13 that binds strongly to the 16S ribosomal RNA. The polypeptide is Small ribosomal subunit protein uS19 (Psychromonas ingrahamii (strain DSM 17664 / CCUG 51855 / 37)).